We begin with the raw amino-acid sequence, 560 residues long: Vacuolar protein 8 (560 aa).

A lipid anchor (N-myristoyl glycine) is attached at G2. A lipid anchor (S-palmitoyl cysteine) is attached at C4. 9 ARM repeats span residues 39–76, 77–116, 118–157, 159–198, 200–239, 243–282, 284–323, 325–365, and 409–448; these read NRAETDFFSGEPLRALSTLVYSDNIDLQRSASLTFAEI, TERDVRAVDRDTLGPILFLLENSDIEVQRAASAALGNLAV, TDNKVLIVQLGGLQPLIKQMMSPNVEVQCNAVGCITNLAT, EENKAKIARSGALGPLTRLAKSKDMRVQRNATGALLNMTH, DENRQQLVNAGAIPVLVQLLSSSDVDVQYYCTTALSNIAV, NRRKLAETEQRLVQYLVNLTESSSPKVQCQAALALRNLAS, EKYQLEIVQAHGLGPLLRLLRSSYLPLILSAVACIRNISI, PQNE…NLAA, and DELKTHLLELGVFDVLIPLTMSPSVEVQGNSAAALGNLSS.

Belongs to the beta-catenin family.

Its subcellular location is the vacuole membrane. Functionally, functions in both vacuole inheritance and protein targeting from the cytoplasm to vacuole. The sequence is that of Vacuolar protein 8 (VAC8) from Chaetomium globosum (strain ATCC 6205 / CBS 148.51 / DSM 1962 / NBRC 6347 / NRRL 1970) (Soil fungus).